Consider the following 405-residue polypeptide: Deoxyguanosinetriphosphate triphosphohydrolase-like protein (405 aa).

Residues 75 to 219 (RLTHTIEVAQ…AAVADDIAYN (145 aa)) enclose the HD domain.

The protein belongs to the dGTPase family. Type 2 subfamily.

This Allorhizobium ampelinum (strain ATCC BAA-846 / DSM 112012 / S4) (Agrobacterium vitis (strain S4)) protein is Deoxyguanosinetriphosphate triphosphohydrolase-like protein.